Here is a 46-residue protein sequence, read N- to C-terminus: MIYRKWSLLSGPPVILGGAVIAAVAVGFVLQNVTKGEQKKNVSTNK.

Component of complex II composed of eight subunits in plants: four classical SDH subunits SDH1, SDH2, SDH3 and SDH4 (a flavoprotein (FP), an iron-sulfur protein (IP), and a cytochrome b composed of a large and a small subunit.), as well as four subunits unknown in mitochondria from bacteria and heterotrophic eukaryotes.

It is found in the mitochondrion inner membrane. Its pathway is carbohydrate metabolism; tricarboxylic acid cycle. This chain is Succinate dehydrogenase subunit 8, mitochondrial, found in Arabidopsis thaliana (Mouse-ear cress).